The primary structure comprises 321 residues: MGEPQGSRRILVTGGSGLVGRAIQKVVADGAGLPGEEWVFVSSKDADLTDAAQTQALFQKVQPTHVIHLAAMVGGLFRNIKYNLDFWRKNVHINDNVLHSAFEVGTRKVVSCLSTCIFPDKTTYPIDETMIHNGPPHSSNFGYSYAKRMIDVQNRAYFQQHGCTFTAVIPTNVFGPHDNFNIEDGHVLPGLIHKVHLAKSNGSALTVWGTGKPRRQFIYSLDLARLFIWVLREYNEVEPIILSVGEEDEVSIKEAAEAVVEAMDFCGEVTFDSTKSDGQYKKTASNGKLRAYLPDFRFTPFKQAVKETCAWFTDNYEQARK.

NADP(+) is bound at residue glycine 14 to glycine 20. Catalysis depends on tyrosine 143, which acts as the Proton donor/acceptor. NADP(+) is bound by residues lysine 147, proline 170 to valine 173, and histidine 186. Positions 194, 208, 215, and 277 each coordinate substrate.

It belongs to the NAD(P)-dependent epimerase/dehydratase family. Fucose synthase subfamily. As to quaternary structure, homodimer.

It carries out the reaction GDP-beta-L-fucose + NADP(+) = GDP-4-dehydro-alpha-D-rhamnose + NADPH + H(+). Its pathway is nucleotide-sugar biosynthesis; GDP-L-fucose biosynthesis via de novo pathway; GDP-L-fucose from GDP-alpha-D-mannose: step 2/2. In terms of biological role, catalyzes the two-step NADP-dependent conversion of GDP-4-dehydro-6-deoxy-D-mannose to GDP-fucose, involving an epimerase and a reductase reaction. This chain is GDP-L-fucose synthase (GFUS), found in Cricetulus griseus (Chinese hamster).